The following is a 213-amino-acid chain: Uracil phosphoribosyltransferase (213 aa).

5-phospho-alpha-D-ribose 1-diphosphate-binding positions include Arg-78, Arg-103, and 131–139; that span reads DPMLATGGT. Residues Ile-197 and 202–204 contribute to the uracil site; that span reads GDA. Residue Asp-203 coordinates 5-phospho-alpha-D-ribose 1-diphosphate.

Belongs to the UPRTase family. Mg(2+) is required as a cofactor.

It carries out the reaction UMP + diphosphate = 5-phospho-alpha-D-ribose 1-diphosphate + uracil. It functions in the pathway pyrimidine metabolism; UMP biosynthesis via salvage pathway; UMP from uracil: step 1/1. Allosterically activated by GTP. Functionally, catalyzes the conversion of uracil and 5-phospho-alpha-D-ribose 1-diphosphate (PRPP) to UMP and diphosphate. The chain is Uracil phosphoribosyltransferase from Bifidobacterium longum (strain DJO10A).